A 263-amino-acid chain; its full sequence is 4-hydroxy-tetrahydrodipicolinate reductase (263 aa).

NAD(+) contacts are provided by residues 7 to 12 (GFKGRM), 96 to 98 (GTT), and 122 to 125 (APNF). The active-site Proton donor/acceptor is the His152. Residue His153 coordinates (S)-2,3,4,5-tetrahydrodipicolinate. Lys156 acts as the Proton donor in catalysis. Residue 162–163 (GT) participates in (S)-2,3,4,5-tetrahydrodipicolinate binding.

It belongs to the DapB family.

It localises to the cytoplasm. The enzyme catalyses (S)-2,3,4,5-tetrahydrodipicolinate + NAD(+) + H2O = (2S,4S)-4-hydroxy-2,3,4,5-tetrahydrodipicolinate + NADH + H(+). The catalysed reaction is (S)-2,3,4,5-tetrahydrodipicolinate + NADP(+) + H2O = (2S,4S)-4-hydroxy-2,3,4,5-tetrahydrodipicolinate + NADPH + H(+). Its pathway is amino-acid biosynthesis; L-lysine biosynthesis via DAP pathway; (S)-tetrahydrodipicolinate from L-aspartate: step 4/4. In terms of biological role, catalyzes the conversion of 4-hydroxy-tetrahydrodipicolinate (HTPA) to tetrahydrodipicolinate. The chain is 4-hydroxy-tetrahydrodipicolinate reductase from Listeria monocytogenes serovar 1/2a (strain ATCC BAA-679 / EGD-e).